The following is a 143-amino-acid chain: 3-dehydroquinate dehydratase (143 aa).

The active-site Proton acceptor is the Y22. Residues N73, H79, and D86 each contribute to the substrate site. The active-site Proton donor is H99. Substrate contacts are provided by residues 100 to 101 and R110; that span reads LS.

It belongs to the type-II 3-dehydroquinase family. In terms of assembly, homododecamer.

The catalysed reaction is 3-dehydroquinate = 3-dehydroshikimate + H2O. It participates in metabolic intermediate biosynthesis; chorismate biosynthesis; chorismate from D-erythrose 4-phosphate and phosphoenolpyruvate: step 3/7. Catalyzes a trans-dehydration via an enolate intermediate. The protein is 3-dehydroquinate dehydratase of Salinispora tropica (strain ATCC BAA-916 / DSM 44818 / JCM 13857 / NBRC 105044 / CNB-440).